A 184-amino-acid polypeptide reads, in one-letter code: Endoribonuclease YbeY (184 aa).

Zn(2+)-binding residues include His-118, His-122, and His-128.

The protein belongs to the endoribonuclease YbeY family. Requires Zn(2+) as cofactor.

The protein resides in the cytoplasm. Single strand-specific metallo-endoribonuclease involved in late-stage 70S ribosome quality control and in maturation of the 3' terminus of the 16S rRNA. This chain is Endoribonuclease YbeY, found in Nocardia farcinica (strain IFM 10152).